Here is a 328-residue protein sequence, read N- to C-terminus: Phosphate acyltransferase (328 aa).

Belongs to the PlsX family. As to quaternary structure, homodimer. Probably interacts with PlsY.

Its subcellular location is the cytoplasm. The enzyme catalyses a fatty acyl-[ACP] + phosphate = an acyl phosphate + holo-[ACP]. Its pathway is lipid metabolism; phospholipid metabolism. Catalyzes the reversible formation of acyl-phosphate (acyl-PO(4)) from acyl-[acyl-carrier-protein] (acyl-ACP). This enzyme utilizes acyl-ACP as fatty acyl donor, but not acyl-CoA. In Staphylococcus aureus (strain USA300), this protein is Phosphate acyltransferase.